Reading from the N-terminus, the 2517-residue chain is Non-reducing polyketide synthase pkbA (2517 aa).

An N-terminal acylcarrier protein transacylase domain (SAT) region spans residues 59–250 (LERVAGPAEK…KRFDLRGRFH (192 aa)). Residues 380 to 775 (SEPIAIIGMG…SANTVSSLKE (396 aa)) enclose the Ketosynthase family 3 (KS3) domain. Active-site for beta-ketoacyl synthase activity residues include cysteine 547, histidine 682, and histidine 721. Positions 849-1158 (AFGGQVARSV…TGTAALADAT (310 aa)) are malonyl-CoA:ACP transacylase (MAT) domain. Residue serine 935 is the For acyl/malonyl transferase activity of the active site. The interval 1221–1353 (EEFLTFVKYK…GTVVLRENDT (133 aa)) is N-terminal hotdog fold. The 310-residue stretch at 1221–1530 (EEFLTFVKYK…FTRVQISSLG (310 aa)) folds into the PKS/mFAS DH domain. Positions 1251–1525 (FVKGHAVLAE…ILGAHFTRVQ (275 aa)) are product template (PT) domain. Histidine 1255 acts as the Proton acceptor; for dehydratase activity in catalysis. Positions 1379–1530 (DCHILQGPVV…FTRVQISSLG (152 aa)) are C-terminal hotdog fold. Aspartate 1437 serves as the catalytic Proton donor; for dehydratase activity. The region spanning 1574-1651 (RPTLEISEKL…SISKCLASYL (78 aa)) is the Carrier 1 domain. Serine 1611 carries the O-(pantetheine 4'-phosphoryl)serine modification. A disordered region spans residues 1659–1684 (QPEDLADADSVESDSDMPTGAVTSGI). Residues 1662–1673 (DLADADSVESDS) show a composition bias toward acidic residues. The Carrier 2 domain maps to 1685 to 1761 (TTPDDAVSRL…DLIALVPALN (77 aa)). The residue at position 1721 (serine 1721) is an O-(pantetheine 4'-phosphoryl)serine. Positions 1976–2075 (LELGGGTGGT…IHRMLRPDGF (100 aa)) are methyltransferase (CMeT) domain. Residues 2200 to 2514 (LMIHGGGHIM…RGYDFLKEEV (315 aa)) are thioesterase (TE) domain.

It depends on pantetheine 4'-phosphate as a cofactor.

It catalyses the reaction 3 malonyl-CoA + acetyl-CoA + S-adenosyl-L-methionine + H(+) = 3-methylorsellinate + S-adenosyl-L-homocysteine + 3 CO2 + 4 CoA. Its pathway is phytotoxin biosynthesis. In terms of biological role, non-reducing polyketide synthase; part of the gene cluster that mediates the biosynthesis of cichorine, a phytotoxin active against knapweed, corn, and soybeans. The first step in the pathway is performed by the non-reducing polyketide synthase pkbA that condenses one acetyl-CoA starter unit with 3 malonyl-CoA units. PkbA also catalyzes one methylation step to produce 3-methylorsellinate. The nonribosomal peptide synthase-like protein cicB, the cytochrome P450 monooxygenase cicH and the O-methyltransferase cicE are involved in the conversion of 3-methylorsellinate into nidulol. CicB converts 3-methylorsellinate to a yet unidentified intermediate, cicH may play a ring-closing role for cichorine and cicE is plausibly responsible for the methylation of one of the phenol groups. The oxidoreductase cicC acts downstream with still unidentified enzymes to further convert nidulol into cichorin. The protein is Non-reducing polyketide synthase pkbA of Emericella nidulans (strain FGSC A4 / ATCC 38163 / CBS 112.46 / NRRL 194 / M139) (Aspergillus nidulans).